Here is a 419-residue protein sequence, read N- to C-terminus: UDP-N-acetylglucosamine 1-carboxyvinyltransferase (419 aa).

22-23 is a binding site for phosphoenolpyruvate; the sequence is KN. UDP-N-acetyl-alpha-D-glucosamine is bound at residue R92. The active-site Proton donor is C116. Position 116 is a 2-(S-cysteinyl)pyruvic acid O-phosphothioketal (C116). Residues D306 and I328 each contribute to the UDP-N-acetyl-alpha-D-glucosamine site.

This sequence belongs to the EPSP synthase family. MurA subfamily.

It localises to the cytoplasm. It catalyses the reaction phosphoenolpyruvate + UDP-N-acetyl-alpha-D-glucosamine = UDP-N-acetyl-3-O-(1-carboxyvinyl)-alpha-D-glucosamine + phosphate. It participates in cell wall biogenesis; peptidoglycan biosynthesis. Functionally, cell wall formation. Adds enolpyruvyl to UDP-N-acetylglucosamine. The protein is UDP-N-acetylglucosamine 1-carboxyvinyltransferase of Pseudoalteromonas translucida (strain TAC 125).